Consider the following 182-residue polypeptide: Large ribosomal subunit protein uL10 (182 aa).

It belongs to the universal ribosomal protein uL10 family. In terms of assembly, part of the ribosomal stalk of the 50S ribosomal subunit. The N-terminus interacts with L11 and the large rRNA to form the base of the stalk. The C-terminus forms an elongated spine to which L12 dimers bind in a sequential fashion forming a multimeric L10(L12)X complex.

Forms part of the ribosomal stalk, playing a central role in the interaction of the ribosome with GTP-bound translation factors. In Microcystis aeruginosa (strain NIES-843 / IAM M-2473), this protein is Large ribosomal subunit protein uL10.